Reading from the N-terminus, the 342-residue chain is tRNA dimethylallyltransferase (342 aa).

Positions 1–13 (MNDTTAKTLNCSP) are enriched in polar residues. The tract at residues 1–21 (MNDTTAKTLNCSPASRDGFPE) is disordered. An ATP-binding site is contributed by 40–47 (GPTGVGKT). Residue 42 to 47 (TGVGKT) participates in substrate binding. Interaction with substrate tRNA regions lie at residues 65–68 (DSMQ) and 189–193 (QRILR).

Belongs to the IPP transferase family. As to quaternary structure, monomer. Mg(2+) is required as a cofactor.

It carries out the reaction adenosine(37) in tRNA + dimethylallyl diphosphate = N(6)-dimethylallyladenosine(37) in tRNA + diphosphate. In terms of biological role, catalyzes the transfer of a dimethylallyl group onto the adenine at position 37 in tRNAs that read codons beginning with uridine, leading to the formation of N6-(dimethylallyl)adenosine (i(6)A). The protein is tRNA dimethylallyltransferase of Syntrophobacter fumaroxidans (strain DSM 10017 / MPOB).